Reading from the N-terminus, the 477-residue chain is Bifunctional protein HldE (477 aa).

The segment at 1–318 is ribokinase; the sequence is MKVNLPAFER…ENAVRGRAAT (318 aa). 195–198 serves as a coordination point for ATP; that stretch reads NLSE. Residue D264 is part of the active site. The interval 344-477 is cytidylyltransferase; it reads MTNGVFDILH…IKKIQTESEK (134 aa).

This sequence in the N-terminal section; belongs to the carbohydrate kinase PfkB family. In the C-terminal section; belongs to the cytidylyltransferase family. As to quaternary structure, homodimer.

It catalyses the reaction D-glycero-beta-D-manno-heptose 7-phosphate + ATP = D-glycero-beta-D-manno-heptose 1,7-bisphosphate + ADP + H(+). The catalysed reaction is D-glycero-beta-D-manno-heptose 1-phosphate + ATP + H(+) = ADP-D-glycero-beta-D-manno-heptose + diphosphate. It participates in nucleotide-sugar biosynthesis; ADP-L-glycero-beta-D-manno-heptose biosynthesis; ADP-L-glycero-beta-D-manno-heptose from D-glycero-beta-D-manno-heptose 7-phosphate: step 1/4. Its pathway is nucleotide-sugar biosynthesis; ADP-L-glycero-beta-D-manno-heptose biosynthesis; ADP-L-glycero-beta-D-manno-heptose from D-glycero-beta-D-manno-heptose 7-phosphate: step 3/4. In terms of biological role, catalyzes the phosphorylation of D-glycero-D-manno-heptose 7-phosphate at the C-1 position to selectively form D-glycero-beta-D-manno-heptose-1,7-bisphosphate. Catalyzes the ADP transfer from ATP to D-glycero-beta-D-manno-heptose 1-phosphate, yielding ADP-D-glycero-beta-D-manno-heptose. This chain is Bifunctional protein HldE, found in Salmonella arizonae (strain ATCC BAA-731 / CDC346-86 / RSK2980).